The sequence spans 149 residues: ATP synthase epsilon chain (149 aa).

Basic and acidic residues-rich tracts occupy residues 99 to 116 (DVER…RLEE) and 123 to 134 (RETHEAARDRAR). Positions 99–149 (DVERAESAEERAKRRLEEGVQEEERETHEAARDRARNRLRVAMGKVGTRQS) are disordered.

This sequence belongs to the ATPase epsilon chain family. In terms of assembly, F-type ATPases have 2 components, CF(1) - the catalytic core - and CF(0) - the membrane proton channel. CF(1) has five subunits: alpha(3), beta(3), gamma(1), delta(1), epsilon(1). CF(0) has three main subunits: a, b and c.

The protein localises to the cell inner membrane. Its function is as follows. Produces ATP from ADP in the presence of a proton gradient across the membrane. In Salinibacter ruber (strain DSM 13855 / M31), this protein is ATP synthase epsilon chain.